We begin with the raw amino-acid sequence, 321 residues long: MIDFRPFYQQIATTNLSDWLETLPLQLKEWETQTHGDYAKWSKIVDFLPDLHADEIDLKSAVKSDRTFPLSEGEKQRIIHHLKQLMPWRKGPYHLFGIHVDCEWRSDFKWDRVLPHLAPLQGRTILDVGCGSGYHMWRMVGEGAKMVVGIDPTELFLCQFEAVRKLLNNDRRANLIPLGIEQMQPLAAFDTVFSMGVLYHRKSPLDHLSQLKNQLVKGGELVLETLVVDGDVNTVLIPADRYAKMKNVYFIPSVAALINWLEKVGFTNVRCVDVATTTLEEQRKTDWLENESLIDFLDSNDHSKTIEGYQAPKRAVILANK.

Residues Lys90, Trp104, Lys109, Gly129, Asp151–Thr153, Ile180–Glu181, Met195, Tyr199, and Arg314 contribute to the carboxy-S-adenosyl-L-methionine site.

This sequence belongs to the class I-like SAM-binding methyltransferase superfamily. CmoB family. In terms of assembly, homotetramer.

The enzyme catalyses carboxy-S-adenosyl-L-methionine + 5-hydroxyuridine(34) in tRNA = 5-carboxymethoxyuridine(34) in tRNA + S-adenosyl-L-homocysteine + H(+). In terms of biological role, catalyzes carboxymethyl transfer from carboxy-S-adenosyl-L-methionine (Cx-SAM) to 5-hydroxyuridine (ho5U) to form 5-carboxymethoxyuridine (cmo5U) at position 34 in tRNAs. The protein is tRNA U34 carboxymethyltransferase of Haemophilus influenzae (strain 86-028NP).